We begin with the raw amino-acid sequence, 444 residues long: UDP-N-acetylmuramate--L-alanine ligase (444 aa).

110–116 (GAHGKTS) contributes to the ATP binding site.

Belongs to the MurCDEF family.

Its subcellular location is the cytoplasm. The catalysed reaction is UDP-N-acetyl-alpha-D-muramate + L-alanine + ATP = UDP-N-acetyl-alpha-D-muramoyl-L-alanine + ADP + phosphate + H(+). It functions in the pathway cell wall biogenesis; peptidoglycan biosynthesis. Its function is as follows. Cell wall formation. In Streptococcus pneumoniae (strain Hungary19A-6), this protein is UDP-N-acetylmuramate--L-alanine ligase.